The following is a 506-amino-acid chain: Pisatin demethylase (506 aa).

Cysteine 453 is a heme binding site.

Belongs to the cytochrome P450 family. The cofactor is heme.

Can detoxify the phytoalexin pisatin from garden pea. Pisatin is an antimicrobial compound produced by pea in response to infection by plant pathogens. The protein is Pisatin demethylase (PDA6-1) of Fusarium vanettenii (Neocosmospora pisi).